We begin with the raw amino-acid sequence, 343 residues long: tRNA N6-adenosine threonylcarbamoyltransferase (343 aa).

Residues His120 and His124 each coordinate Fe cation. Residues Val142–Gly146, Asp175, Gly188, Asp192, and Asn281 contribute to the substrate site. Residue Asp310 participates in Fe cation binding.

This sequence belongs to the KAE1 / TsaD family. The cofactor is Fe(2+).

The protein resides in the cytoplasm. The enzyme catalyses L-threonylcarbamoyladenylate + adenosine(37) in tRNA = N(6)-L-threonylcarbamoyladenosine(37) in tRNA + AMP + H(+). Its function is as follows. Required for the formation of a threonylcarbamoyl group on adenosine at position 37 (t(6)A37) in tRNAs that read codons beginning with adenine. Is involved in the transfer of the threonylcarbamoyl moiety of threonylcarbamoyl-AMP (TC-AMP) to the N6 group of A37, together with TsaE and TsaB. TsaD likely plays a direct catalytic role in this reaction. The protein is tRNA N6-adenosine threonylcarbamoyltransferase of Bacillus anthracis.